The sequence spans 121 residues: Anther-specific protein SF2 (121 aa).

Residues 1–21 (MANNSVSYLVLLLLVFVLAIS) form the signal peptide. Asparagine 115 is a glycosylation site (N-linked (GlcNAc...) asparagine).

Epidermal anther cells.

The protein resides in the secreted. Its subcellular location is the cell wall. Anther-specific cell wall protein which could contribute to the cell wall architecture of epidermal anther cells via intermolecular disulfide bridges. The chain is Anther-specific protein SF2 from Helianthus annuus (Common sunflower).